The following is a 299-amino-acid chain: MSESNRLRIAIQKSGRLSKESLKLLKSCGVKFNINEQRLIAHSDNMPIDLLRVRDDDIPGLVMDGVVDLGFIGENVLEEEQIERQSLNKPSECIKLRELDFGACRLSLAVPNEFNYQDASSLEGVRIATSYPNILRRYMQQKGISYNDCMLKGSVEVAPRAGLSDAICDLVSTGATLEANGLYETEVIYQSTACLIQSTTSQPDDKQALINKILSRINGVVRAKESKYILLHAPTETLEQIVALLPGAENPTVLPLNDDTNRVAIHAVSTEDLFWDTMEQLTQLGASSILVMPIEKMMG.

This sequence belongs to the ATP phosphoribosyltransferase family. Long subfamily. Mg(2+) serves as cofactor.

It is found in the cytoplasm. The enzyme catalyses 1-(5-phospho-beta-D-ribosyl)-ATP + diphosphate = 5-phospho-alpha-D-ribose 1-diphosphate + ATP. The protein operates within amino-acid biosynthesis; L-histidine biosynthesis; L-histidine from 5-phospho-alpha-D-ribose 1-diphosphate: step 1/9. Its activity is regulated as follows. Feedback inhibited by histidine. Functionally, catalyzes the condensation of ATP and 5-phosphoribose 1-diphosphate to form N'-(5'-phosphoribosyl)-ATP (PR-ATP). Has a crucial role in the pathway because the rate of histidine biosynthesis seems to be controlled primarily by regulation of HisG enzymatic activity. This Shewanella piezotolerans (strain WP3 / JCM 13877) protein is ATP phosphoribosyltransferase.